Reading from the N-terminus, the 467-residue chain is Dynactin subunit 4 (467 aa).

The residue at position 2 (alanine 2) is an N-acetylalanine. Lysine 222 participates in a covalent cross-link: Glycyl lysine isopeptide (Lys-Gly) (interchain with G-Cter in SUMO2). Threonine 414 carries the phosphothreonine modification.

Belongs to the dynactin subunit 4 family. Subunit of dynactin, a multiprotein complex part of a tripartite complex with dynein and a adapter, such as BICDL1, BICD2 or HOOK3. The dynactin complex is built around ACTR1A/ACTB filament and consists of an actin-related filament composed of a shoulder domain, a pointed end and a barbed end. Its length is defined by its flexible shoulder domain. The soulder is composed of 2 DCTN1 subunits, 4 DCTN2 and 2 DCTN3. The 4 DCNT2 (via N-terminus) bind the ACTR1A filament and act as molecular rulers to determine the length. The pointed end is important for binding dynein-dynactin cargo adapters. Consists of 4 subunits: ACTR10, DCNT4, DCTN5 and DCTN6. The barbed end is composed of a CAPZA1:CAPZB heterodimers, which binds ACTR1A/ACTB filament and dynactin and stabilizes dynactin. Interacts with ATP7B, but not ATP7A, in a copper-dependent manner. Interacts with ANK2; this interaction is required for localization at costameres. Interacts with N4BP2L1.

The protein localises to the cytoplasm. It localises to the cytoskeleton. The protein resides in the microtubule organizing center. Its subcellular location is the centrosome. It is found in the stress fiber. The protein localises to the cell cortex. It localises to the myofibril. The protein resides in the sarcomere. In terms of biological role, part of the dynactin complex that activates the molecular motor dynein for ultra-processive transport along microtubules. Together with dynein is involved in spindle assembly and cytokinesis. The protein is Dynactin subunit 4 (DCTN4) of Sus scrofa (Pig).